The chain runs to 440 residues: Calcium/calmodulin-regulated receptor-like kinase 1 (440 aa).

The helical transmembrane segment at 8–28 (LIVGISLGLVIGVVLAISALF) threads the bilayer. Positions 28 to 228 (FCFRYHRKKS…ARGLEYLHDG (201 aa)) are calmodulin binding. The region spanning 113-380 (CNFTTLIGQG…DIVQVLTRVI (268 aa)) is the Protein kinase domain. Residues 119 to 127 (IGQGAFGPV) and Lys141 contribute to the ATP site. Tyr186 bears the Phosphotyrosine mark. The Proton acceptor role is filled by Asp237. Ser241 is modified (phosphoserine). Thr274 is subject to Phosphothreonine. The residue at position 282 (Tyr282) is a Phosphotyrosine. Residues 369–440 (MRDIVQVLTR…DSSIAEDVIL (72 aa)) form a calmodulin binding region. Residues 386-427 (RKRQKNSPSPSPRLPPPPPIVEESEGELTANGSLRSEIHRRD) are disordered. A compositionally biased stretch (pro residues) spans 394–405 (SPSPRLPPPPPI).

This sequence belongs to the protein kinase superfamily. Ser/Thr protein kinase family. In terms of assembly, interacts with calmodulin (CaM) in a calcium- (Ca(2+)-) dependent manner. Binds to MEKK1. As to expression, similar transcript expression levels in seedlings, roots, leaves, stems and flowers, and lower levels in siliques, but protein accumulates mostly in 7-day-old seedlings, old roots and young leaves and, to a lower extent, in young roots, old leaves, flowers and siliques (at protein level).

The protein resides in the cell membrane. The protein localises to the endosome membrane. The enzyme catalyses L-seryl-[protein] + ATP = O-phospho-L-seryl-[protein] + ADP + H(+). It carries out the reaction L-threonyl-[protein] + ATP = O-phospho-L-threonyl-[protein] + ADP + H(+). Its activity is regulated as follows. Kinase activity is stimulated by calcium/calmodulin, but blocked by chlorpromazine. Its function is as follows. Required for cold tolerance, via the activation of MAP kinases activity. Phosphorylates and activates MEKK1 in response to cold in a calcium-dependent manner. The polypeptide is Calcium/calmodulin-regulated receptor-like kinase 1 (Arabidopsis thaliana (Mouse-ear cress)).